A 265-amino-acid polypeptide reads, in one-letter code: Uronate dehydrogenase (265 aa).

NAD(+)-binding positions include 12 to 13, 32 to 34, 49 to 50, and 69 to 73; these read QL, DLS, DL, and LGGIS. Substrate contacts are provided by residues Ser-73 and 109-111; that span reads SNH. The active-site Proton acceptor is Tyr-134. Residue Lys-138 coordinates NAD(+). Residue Ser-163 coordinates substrate. An NAD(+)-binding site is contributed by Cys-164. Residue Arg-172 coordinates substrate.

The protein belongs to the NAD(P)-dependent epimerase/dehydratase family. Homohexamer.

It catalyses the reaction beta-D-galacturonate + NAD(+) = D-galactaro-1,5-lactone + NADH + H(+). It carries out the reaction beta-D-glucuronate + NAD(+) = D-glucaro-1,5-lactone + NADH + H(+). It functions in the pathway carbohydrate acid metabolism; D-galacturonate degradation via prokaryotic oxidative pathway. Functionally, catalyzes the oxidation of D-galacturonate and D-glucuronate to galactarate and D-glucarate, respectively. In fact, in water solution the substrate D-galacturonate is predominantly in pyranosic form whose beta anomer is converted by the enzyme to D-galactaro-1,5-lactone; in solution, this reaction product rearranges to the more stable D-galactaro-1,4-lactone. Makes part of the oxidative degradation pathway of D-galacturonate, which allows A.tumefaciens to utilize D-galacturonate as a sole carbon source. Cannot use NADP(+) instead of NAD(+) as cosubstrate. Is not active on D-galactose, D-glucose, D-galactonate and D-gluconate. The sequence is that of Uronate dehydrogenase (udh) from Agrobacterium fabrum (strain C58 / ATCC 33970) (Agrobacterium tumefaciens (strain C58)).